The chain runs to 340 residues: Glycerol-3-phosphate dehydrogenase [NAD(P)+] (340 aa).

Residues S13, Y14, and K108 each coordinate NADPH. 3 residues coordinate sn-glycerol 3-phosphate: K108, G137, and T139. A141 lines the NADPH pocket. Sn-glycerol 3-phosphate is bound by residues K193, D246, S256, R257, and N258. K193 functions as the Proton acceptor in the catalytic mechanism. R257 contacts NADPH. NADPH contacts are provided by I281 and E283.

The protein belongs to the NAD-dependent glycerol-3-phosphate dehydrogenase family.

It localises to the cytoplasm. The catalysed reaction is sn-glycerol 3-phosphate + NAD(+) = dihydroxyacetone phosphate + NADH + H(+). It carries out the reaction sn-glycerol 3-phosphate + NADP(+) = dihydroxyacetone phosphate + NADPH + H(+). It participates in membrane lipid metabolism; glycerophospholipid metabolism. Catalyzes the reduction of the glycolytic intermediate dihydroxyacetone phosphate (DHAP) to sn-glycerol 3-phosphate (G3P), the key precursor for phospholipid synthesis. The polypeptide is Glycerol-3-phosphate dehydrogenase [NAD(P)+] (Bartonella henselae (strain ATCC 49882 / DSM 28221 / CCUG 30454 / Houston 1) (Rochalimaea henselae)).